We begin with the raw amino-acid sequence, 451 residues long: Putative gluconeogenesis factor (451 aa).

Belongs to the gluconeogenesis factor family.

It localises to the cytoplasm. Its function is as follows. Required for morphogenesis under gluconeogenic growth conditions. This is Putative gluconeogenesis factor from Clostridium acetobutylicum (strain ATCC 824 / DSM 792 / JCM 1419 / IAM 19013 / LMG 5710 / NBRC 13948 / NRRL B-527 / VKM B-1787 / 2291 / W).